Consider the following 176-residue polypeptide: Glyoxalase domain-containing protein RDO1 (176 aa).

In terms of domain architecture, VOC spans 53 to 172 (SLDHLVITCH…DNNLIELSSY (120 aa)). The active-site Proton donor/acceptor is the Glu-168.

Belongs to the glyoxalase I family.

It functions in the pathway secondary metabolite biosynthesis. In terms of biological role, glyoxalase domain-containing protein; part of the gene cluster that mediates the biosynthesis of itaconic acid and 2-hydroxyparaconate. Cis-aconitate is secreted by the mitochondrial tricarboxylate transporter MTT1. In the cytosol cis-aconitate is converted into trans-aconitate via isomerization by the aconitate-delta-isomerase ADI1. Decarboxylation of trans-aconitate by the trans-aconitate decarboxylase TAD1 then leads then to the production of itaconic acid. The cytochrome P450 monooxygenase CYP3 further converts itaconate to 2-hydroxyparaconate via oxidation of the double bond, leading to a transient epoxide, which can subsequently be lactonized to produce 2-hydroxyparaconate. Secretion of itaconate and possibly 2-hydroxyparaconate into the medium is mediated by the major facilitator ITP1. The glyoxalase domain-containing protein RDO1 is not involved in the biosynthesis of itaconate and 2-hydroxyparaconate, however, it might play a role in the further conversion of 2-hydroxyparaconate to itatartarate. The polypeptide is Glyoxalase domain-containing protein RDO1 (Mycosarcoma maydis (Corn smut fungus)).